Reading from the N-terminus, the 307-residue chain is Acyl transferase (307 aa).

Residues S116, D213, and H243 each act as charge relay system in the active site.

It belongs to the LuxD family.

The protein operates within lipid metabolism; fatty acid reduction for biolumincescence. Functionally, acyl transferase is part of the fatty acid reductase system required for aldehyde biosynthesis; it produces fatty acids for the luminescent reaction. This is Acyl transferase from Photorhabdus luminescens (Xenorhabdus luminescens).